We begin with the raw amino-acid sequence, 331 residues long: Inner membrane ABC transporter permease protein YjfF (331 aa).

Over 1–5 the chain is Cytoplasmic; sequence MIKRN. The chain crosses the membrane as a helical span at residues 6-26; it reads LPLMITIGVFVLGYLYCLTQF. Over 27 to 42 the chain is Periplasmic; that stretch reads PGFASTRVICNILTDN. A helical transmembrane segment spans residues 43–63; that stretch reads AFLGIIAVGMTFVILSGGIDL. Topologically, residues 64-88 are cytoplasmic; sequence SVGSVIAFTGVFLAKVIGDFGLSPL. A helical transmembrane segment spans residues 89–109; sequence LAFPLVLVMGCAFGAFMGLLI. Residues 110–113 lie on the Periplasmic side of the membrane; that stretch reads DALK. The helical transmembrane segment at 114–134 threads the bilayer; the sequence is IPAFIITLAGMFFLRGVSYLV. The Cytoplasmic segment spans residues 135–159; sequence SEESIPINHPIYDTLSSLAWKIPGG. Residues 160-180 traverse the membrane as a helical segment; the sequence is GRLSAMGLLMLAVVVIGIFLA. Residues 181–222 are Periplasmic-facing; the sequence is HRTRFGNQVYAIGGNATSANLMGISTRSTTIRIYMLSTGLAT. A helical transmembrane segment spans residues 223–243; the sequence is LAGIVFSIYTQAGYALAGVGV. The Cytoplasmic portion of the chain corresponds to 244-250; the sequence is ELDAIAS. The chain crosses the membrane as a helical span at residues 251 to 271; sequence VVIGGTLLSGGVGTVLGTLFG. Residues 272–294 lie on the Periplasmic side of the membrane; that stretch reads VAIQGLIQTYINFDGTLSSWWTK. A helical transmembrane segment spans residues 295–315; the sequence is IAIGILLFIFIALQRGLTVLW. Residues 316–331 are Cytoplasmic-facing; that stretch reads ENRQSSPVTRVNIAQQ.

The protein belongs to the binding-protein-dependent transport system permease family. AraH/RbsC subfamily. As to quaternary structure, the complex is composed of two ATP-binding proteins (YtfR), two transmembrane proteins (YtfT and YjfF) and a solute-binding protein (YtfQ).

It is found in the cell inner membrane. Part of the ABC transporter complex YtfQRT-YjfF involved in galactofuranose transport. Probably responsible for the translocation of the substrate across the membrane. This chain is Inner membrane ABC transporter permease protein YjfF (yjfF), found in Escherichia coli (strain K12).